A 456-amino-acid polypeptide reads, in one-letter code: Enolase (456 aa).

Gln-164 contributes to the (2R)-2-phosphoglycerate binding site. Catalysis depends on Glu-207, which acts as the Proton donor. Residues Asp-244, Glu-287, and Asp-314 each contribute to the Mg(2+) site. Lys-339, Arg-368, Ser-369, and Lys-390 together coordinate (2R)-2-phosphoglycerate. Lys-339 serves as the catalytic Proton acceptor.

Belongs to the enolase family. Component of the RNA degradosome, a multiprotein complex involved in RNA processing and mRNA degradation. Mg(2+) is required as a cofactor.

Its subcellular location is the cytoplasm. It localises to the secreted. The protein resides in the cell surface. It catalyses the reaction (2R)-2-phosphoglycerate = phosphoenolpyruvate + H2O. It functions in the pathway carbohydrate degradation; glycolysis; pyruvate from D-glyceraldehyde 3-phosphate: step 4/5. In terms of biological role, catalyzes the reversible conversion of 2-phosphoglycerate (2-PG) into phosphoenolpyruvate (PEP). It is essential for the degradation of carbohydrates via glycolysis. In Francisella tularensis subsp. holarctica (strain OSU18), this protein is Enolase.